Here is a 102-residue protein sequence, read N- to C-terminus: Large ribosomal subunit protein mL63 (102 aa).

It belongs to the mitochondrion-specific ribosomal protein mL63 family.

The protein localises to the mitochondrion. In Bos taurus (Bovine), this protein is Large ribosomal subunit protein mL63 (MRPL57).